A 495-amino-acid chain; its full sequence is D-hydantoinase/dihydropyrimidinase (495 aa).

Zn(2+) contacts are provided by His59, His61, and Lys150. The residue at position 150 (Lys150) is an N6-carboxylysine. Tyr155 provides a ligand contact to substrate. 2 residues coordinate Zn(2+): His183 and His239. A substrate-binding site is contributed by Ser289. Residue Asp316 participates in Zn(2+) binding. Asn337 lines the substrate pocket.

The protein belongs to the metallo-dependent hydrolases superfamily. Hydantoinase/dihydropyrimidinase family. As to quaternary structure, homotetramer. Requires Zn(2+) as cofactor. Post-translationally, carboxylation allows a single lysine to coordinate two zinc ions.

It carries out the reaction 5,6-dihydrouracil + H2O = 3-(carbamoylamino)propanoate + H(+). Functionally, catalyzes the hydrolysis of dihydropyrimidines and of the structurally related DL-5-mono-substituted hydantoins, to produce N-carbamoyl-D-amino acids. This Pseudomonas putida (Arthrobacter siderocapsulatus) protein is D-hydantoinase/dihydropyrimidinase.